An 85-amino-acid chain; its full sequence is Putative regulatory protein THEYE_A0405 (85 aa).

It belongs to the RemA family.

This is Putative regulatory protein THEYE_A0405 from Thermodesulfovibrio yellowstonii (strain ATCC 51303 / DSM 11347 / YP87).